A 428-amino-acid chain; its full sequence is Immunoglobulin superfamily containing leucine-rich repeat protein (428 aa).

A signal peptide spans 1–18 (MQELRLLCLVVLVGLAQA). Residues 19 to 50 (CPEPCECGEKYGFHIADCAYRDLQAVPSGFPA) form the LRRNT domain. Asn51 carries an N-linked (GlcNAc...) asparagine glycan. LRR repeat units lie at residues 51 to 72 (NVTT…AFRE), 75 to 96 (RLQS…ALAS), 99 to 122 (QLKS…HSLS), 123 to 144 (ALQL…AFRS), and 147 to 168 (ALRS…TFAP). The LRRCT domain occupies 180 to 231 (NPFDCTCGIVWFKTWALTTAVSIPEQDNITCTSPHVLKGTRLNRLLPLPCSA). One can recognise an Ig-like domain in the interval 232 to 343 (PSVQLTYQPS…GSAESSVNVA (112 aa)). Residues Cys257 and Cys327 are joined by a disulfide bond. Asn309 carries an N-linked (GlcNAc...) asparagine glycan.

The protein localises to the secreted. This chain is Immunoglobulin superfamily containing leucine-rich repeat protein (ISLR), found in Bos taurus (Bovine).